A 326-amino-acid chain; its full sequence is Ribose operon repressor (326 aa).

Positions 1-56 constitute an HTH lacI-type domain; that stretch reads MATIKDVAGAAGVSVATVSRNLNDNGYVHEETRTRVIAAMAKLNYYPNEVARSLYK. Positions 4 to 23 form a DNA-binding region, H-T-H motif; sequence IKDVAGAAGVSVATVSRNLN.

Transcriptional repressor for the ribose rbsDACBK operon. In Bacillus subtilis (strain 168), this protein is Ribose operon repressor (rbsR).